An 801-amino-acid chain; its full sequence is Na(+)/H(+) antiporter subunit A1 (801 aa).

The next 20 membrane-spanning stretches (helical) occupy residues 1-21 (MSLLHIAVLLPLIFALIIPFL), 30-50 (LGWFVLPVPIVLFIYFISLIS), 79-99 (LGLLFSLLITGIGSLVVLYSI), 117-137 (LFMGAMLGVVLSDNFIILYLF), 166-186 (LIITVLGGLSMLGGIILLSLA), 206-226 (PFFILVMILFMIGAFTKSAQV), 228-250 (FYIWLPDAMEAPTPVSAYLHSAT), 265-285 (IFAISEGWVWTITLVGLITLF), 300-320 (ILAFSTVSQLGMIMSMLGIGA), 337-357 (FVAAIFHLINHATFKGALFMI), 373-393 (LGGLLTIMPISFTLTVITTLS), 427-447 (LGILLPIIAIIGSIFTFVYSI), 472-492 (ILMLISPIILTSLVIVFGLFP), 522-542 (GITPAFLSTIGIYIIGILLLI), 591-611 (LVIILGILIALTFVTVISVPF), 623-643 (VFEGATVLFLLIASTFIIFAK), 646-666 (LFSIIMLSAVGYAISVLFIFF), 671-691 (LALTQFVVESISTALFLLCFY), 707-727 (LTNAVISIGVGLSVIILGLIG), and 764-784 (MDTLFESSVLGIAGLGVYTMI).

It belongs to the CPA3 antiporters (TC 2.A.63) subunit A family. As to quaternary structure, may form a heterooligomeric complex that consists of seven subunits: mnhA1, mnhB1, mnhC1, mnhD1, mnhE1, mnhF1 and mnhG1.

Its subcellular location is the cell membrane. Functionally, mnh complex is a Na(+)/H(+) antiporter involved in Na(+) excretion. This chain is Na(+)/H(+) antiporter subunit A1 (mnhA1), found in Staphylococcus epidermidis (strain ATCC 35984 / DSM 28319 / BCRC 17069 / CCUG 31568 / BM 3577 / RP62A).